Here is a 196-residue protein sequence, read N- to C-terminus: Pyridoxal 5'-phosphate synthase subunit PdxT (196 aa).

52–54 (GES) lines the L-glutamine pocket. The active-site Nucleophile is the Cys84. L-glutamine-binding positions include Arg113 and 141–142 (IR). Residues His178 and Glu180 each act as charge relay system in the active site.

It belongs to the glutaminase PdxT/SNO family. As to quaternary structure, in the presence of PdxS, forms a dodecamer of heterodimers. Only shows activity in the heterodimer.

It catalyses the reaction aldehydo-D-ribose 5-phosphate + D-glyceraldehyde 3-phosphate + L-glutamine = pyridoxal 5'-phosphate + L-glutamate + phosphate + 3 H2O + H(+). The catalysed reaction is L-glutamine + H2O = L-glutamate + NH4(+). The protein operates within cofactor biosynthesis; pyridoxal 5'-phosphate biosynthesis. In terms of biological role, catalyzes the hydrolysis of glutamine to glutamate and ammonia as part of the biosynthesis of pyridoxal 5'-phosphate. The resulting ammonia molecule is channeled to the active site of PdxS. In Pyrococcus abyssi (strain GE5 / Orsay), this protein is Pyridoxal 5'-phosphate synthase subunit PdxT.